Reading from the N-terminus, the 298-residue chain is Quinolinate synthase (298 aa).

H19 and S36 together coordinate iminosuccinate. C81 serves as a coordination point for [4Fe-4S] cluster. Residues 107–109 and S124 contribute to the iminosuccinate site; that span reads YVN. Position 168 (C168) interacts with [4Fe-4S] cluster. Iminosuccinate contacts are provided by residues 193 to 195 and T210; that span reads HPE. C254 provides a ligand contact to [4Fe-4S] cluster.

Belongs to the quinolinate synthase family. Type 2 subfamily. Requires [4Fe-4S] cluster as cofactor.

The protein resides in the cytoplasm. The enzyme catalyses iminosuccinate + dihydroxyacetone phosphate = quinolinate + phosphate + 2 H2O + H(+). It functions in the pathway cofactor biosynthesis; NAD(+) biosynthesis; quinolinate from iminoaspartate: step 1/1. In terms of biological role, catalyzes the condensation of iminoaspartate with dihydroxyacetone phosphate to form quinolinate. This is Quinolinate synthase from Thermotoga sp. (strain RQ2).